The primary structure comprises 398 residues: MNIHEYQAKALLHEFGVPISKGVPVLRPEDADAAAKTLGGPVWVVKSQIHAGGRGKGKFKEASAGDKGGVRLAKSIDEVNTFARQMLGATLVTVQTGPDGKQVNRLYIEDGSDIDKEFYLSLLVDRETSKVAFVVSTEGGVNIEDVAHETPEKIVTFSVDPATGVMGHHGRAVAKALKLSGDLAKQAEKLTTQLYNAFVAKDMAMLEINPLVVTKQGQLRVLDAKVSFDSNALFKHPEVVALRDETEEDAKEIEASKYDLNYVALDGTIGCMVNGAGLAMATMDIIKLYGMEPANFLDVGGGASKEKVAAAFKIITADPNVKGILVNIFGGIMKCDVIAEGVVAAVKEVGLKVPLVVRLEGTNVDLGKKIISESGLNVLPADNLDDAAQKIVKAVKGG.

Residues 9 to 254 (KALLHEFGVP…ETEEDAKEIE (246 aa)) enclose the ATP-grasp domain. Residues K46, 53 to 55 (GRG), E109, S112, and E117 each bind ATP. Residues N209 and D223 each contribute to the Mg(2+) site. Substrate-binding positions include N274 and 331–333 (GIM).

It belongs to the succinate/malate CoA ligase beta subunit family. In terms of assembly, heterotetramer of two alpha and two beta subunits. The cofactor is Mg(2+).

It carries out the reaction succinate + ATP + CoA = succinyl-CoA + ADP + phosphate. The catalysed reaction is GTP + succinate + CoA = succinyl-CoA + GDP + phosphate. It functions in the pathway carbohydrate metabolism; tricarboxylic acid cycle; succinate from succinyl-CoA (ligase route): step 1/1. Succinyl-CoA synthetase functions in the citric acid cycle (TCA), coupling the hydrolysis of succinyl-CoA to the synthesis of either ATP or GTP and thus represents the only step of substrate-level phosphorylation in the TCA. The beta subunit provides nucleotide specificity of the enzyme and binds the substrate succinate, while the binding sites for coenzyme A and phosphate are found in the alpha subunit. This is Succinate--CoA ligase [ADP-forming] subunit beta from Bradyrhizobium sp. (strain ORS 278).